The chain runs to 467 residues: Coiled-coil domain-containing protein 174 (467 aa).

2 disordered regions span residues 47–76 (INKK…LEEQ) and 129–163 (GATR…SEEW). The segment covering 64 to 76 (RAEKDAEQKLEEQ) has biased composition (basic and acidic residues). Residues 64-99 (RAEKDAEQKLEEQKTLDKAREKLEEKAKLYEKMTKG) are a coiled coil. Over residues 136–147 (IEEERDDDDKEE) the composition is skewed to acidic residues. Residue Ser198 is modified to Phosphoserine. A coiled-coil region spans residues 268–310 (LEMLREQTTDQRIKRENIKEKRKAMLEARLAKLRQKKMKKSKE). Disordered stretches follow at residues 301–365 (RQKK…IREW) and 379–454 (KQSE…VTFQ). 2 stretches are compositionally biased toward basic and acidic residues: residues 349–365 (IQER…IREW) and 379–390 (KQSELRAERDPE). Over residues 406-415 (PMSSQPQSRP) the composition is skewed to polar residues. Residues 423 to 446 (GHSSGQSQEPSSSHTSTPASESSP) are compositionally biased toward low complexity.

It is found in the nucleus. In terms of biological role, probably involved in neuronal development. In Mus musculus (Mouse), this protein is Coiled-coil domain-containing protein 174 (Ccdc174).